The sequence spans 176 residues: GTP-dependent dephospho-CoA kinase (176 aa).

Residues D47, V48, D66, and E125 each coordinate GTP.

The protein belongs to the GTP-dependent DPCK family.

It carries out the reaction 3'-dephospho-CoA + GTP = GDP + CoA + H(+). It functions in the pathway cofactor biosynthesis; coenzyme A biosynthesis. Its function is as follows. Catalyzes the GTP-dependent phosphorylation of the 3'-hydroxyl group of dephosphocoenzyme A to form coenzyme A (CoA). In Methanocella arvoryzae (strain DSM 22066 / NBRC 105507 / MRE50), this protein is GTP-dependent dephospho-CoA kinase.